Here is a 439-residue protein sequence, read N- to C-terminus: Serine hydroxymethyltransferase (439 aa).

Positions 1-20 (MNAPHRDETTASHRDDGFFT) are disordered. Residues Leu-136 and 140–142 (GHL) each bind (6S)-5,6,7,8-tetrahydrofolate. Lys-245 carries the post-translational modification N6-(pyridoxal phosphate)lysine.

It belongs to the SHMT family. As to quaternary structure, homodimer. The cofactor is pyridoxal 5'-phosphate.

It localises to the cytoplasm. It carries out the reaction (6R)-5,10-methylene-5,6,7,8-tetrahydrofolate + glycine + H2O = (6S)-5,6,7,8-tetrahydrofolate + L-serine. It participates in one-carbon metabolism; tetrahydrofolate interconversion. The protein operates within amino-acid biosynthesis; glycine biosynthesis; glycine from L-serine: step 1/1. Catalyzes the reversible interconversion of serine and glycine with tetrahydrofolate (THF) serving as the one-carbon carrier. This reaction serves as the major source of one-carbon groups required for the biosynthesis of purines, thymidylate, methionine, and other important biomolecules. Also exhibits THF-independent aldolase activity toward beta-hydroxyamino acids, producing glycine and aldehydes, via a retro-aldol mechanism. In Jannaschia sp. (strain CCS1), this protein is Serine hydroxymethyltransferase.